The sequence spans 346 residues: tRNA N6-adenosine threonylcarbamoyltransferase (346 aa).

2 residues coordinate Fe cation: H111 and H115. Residues 134–138, D167, G180, and N277 contribute to the substrate site; that span reads LVSGG. Fe cation is bound at residue D305.

Belongs to the KAE1 / TsaD family. The cofactor is Fe(2+).

The protein localises to the cytoplasm. It catalyses the reaction L-threonylcarbamoyladenylate + adenosine(37) in tRNA = N(6)-L-threonylcarbamoyladenosine(37) in tRNA + AMP + H(+). Required for the formation of a threonylcarbamoyl group on adenosine at position 37 (t(6)A37) in tRNAs that read codons beginning with adenine. Is involved in the transfer of the threonylcarbamoyl moiety of threonylcarbamoyl-AMP (TC-AMP) to the N6 group of A37, together with TsaE and TsaB. TsaD likely plays a direct catalytic role in this reaction. This Bordetella bronchiseptica (strain ATCC BAA-588 / NCTC 13252 / RB50) (Alcaligenes bronchisepticus) protein is tRNA N6-adenosine threonylcarbamoyltransferase.